The sequence spans 430 residues: Tol-Pal system protein TolB (430 aa).

Positions 1–19 are cleaved as a signal peptide; the sequence is MKKQIFFTLILLISGLARA.

The protein belongs to the TolB family. The Tol-Pal system is composed of five core proteins: the inner membrane proteins TolA, TolQ and TolR, the periplasmic protein TolB and the outer membrane protein Pal. They form a network linking the inner and outer membranes and the peptidoglycan layer.

The protein localises to the periplasm. Part of the Tol-Pal system, which plays a role in outer membrane invagination during cell division and is important for maintaining outer membrane integrity. The chain is Tol-Pal system protein TolB from Hahella chejuensis (strain KCTC 2396).